The following is a 476-amino-acid chain: Cytosolic iron-sulfur assembly component 3 (476 aa).

Position 2 is an N-acetylalanine (Ala2). Residues Cys24, Cys71, Cys74, Cys77, Cys190, and Cys246 each coordinate [4Fe-4S] cluster. Residues 297–316 (DGLTSSVSAEEPSSHRGGGS) are disordered. The [4Fe-4S] cluster site is built by Cys395 and Cys399.

Belongs to the NARF family. As to quaternary structure, external component of the CIA complex. In the CIA complex, interacts directly with CIAO1 and MMS19.

Its function is as follows. Component of the cytosolic iron-sulfur protein assembly (CIA) complex, a multiprotein complex that mediates the incorporation of iron-sulfur cluster into extramitochondrial Fe/S proteins. Seems to negatively regulate the level of HIF1A expression, although this effect could be indirect. The chain is Cytosolic iron-sulfur assembly component 3 (Ciao3) from Mus musculus (Mouse).